A 270-amino-acid chain; its full sequence is Urease accessory protein UreD (270 aa).

The protein belongs to the UreD family. As to quaternary structure, ureD, UreF and UreG form a complex that acts as a GTP-hydrolysis-dependent molecular chaperone, activating the urease apoprotein by helping to assemble the nickel containing metallocenter of UreC. The UreE protein probably delivers the nickel.

The protein localises to the cytoplasm. Required for maturation of urease via the functional incorporation of the urease nickel metallocenter. This Microcystis aeruginosa (strain NIES-843 / IAM M-2473) protein is Urease accessory protein UreD.